Consider the following 1072-residue polypeptide: Neurofilament heavy polypeptide (1072 aa).

At Ser74 the chain carries Phosphoserine. The IF rod domain maps to 94 to 409; it reads EKEQLQALND…KLLEGEECRI (316 aa). Coiled coils occupy residues 98-132, 174-222, and 293-380; these read LQALNDRFAGYIDKVRQLEAHNRTLEGEAAALRQQ, IAHV…LQEE, and LDRL…QLRE. Residues 278–643 are 55 X 6 AA approximate tandem repeats of K-S-P-[VAGSE]-[KEVTSGA]-[EAVK]; sequence TVQSTLQSEE…AKSPAEAKSP (366 aa). Residues Ser343, Ser414, and Ser417 each carry the phosphoserine modification. The segment at 454–1072 is disordered; the sequence is EEQTEEIQVT…PEDKAAKGDK (619 aa). The segment covering 455-487 has biased composition (acidic residues); the sequence is EQTEEIQVTEEVTEEEDKEAQGEEEEEAEEGGE. A compositionally biased stretch (low complexity) spans 488–499; the sequence is EAATTSPPAEEA. Ser501 carries the post-translational modification Phosphoserine. Residues 501 to 584 are compositionally biased toward basic and acidic residues; it reads SPEKETKSPV…KSPAEAKSPA (84 aa). Repeat copies occupy residues 507-512, 515-520, 521-526, 527-532, 533-538, 539-544, 545-550, 551-556, 557-562, 563-568, 569-574, 575-580, 581-586, 587-592, 593-598, 599-604, 605-610, 611-616, 617-622, 623-628, 629-634, 635-640, 641-646, 647-652, 653-658, 659-664, 665-670, 671-676, 677-682, 683-688, 689-694, 695-700, 701-706, 707-712, 713-718, and 719-724. 37 positions are modified to phosphoserine: Ser516, Ser522, Ser528, Ser534, Ser540, Ser546, Ser552, Ser558, Ser564, Ser570, Ser576, Ser582, Ser588, Ser594, Ser600, Ser606, Ser612, Ser618, Ser624, Ser627, Ser630, Ser636, Ser642, Ser648, Ser654, Ser660, Ser666, Ser672, Ser678, Ser684, Ser687, Ser690, Ser696, Ser702, Ser708, Ser714, and Ser720. Basic and acidic residues predominate over residues 600–620; it reads SPAEAKSPAEVKSPVEAKSPA. The segment covering 621–631 has biased composition (low complexity); sequence EAKSPASVKSP. A compositionally biased stretch (basic and acidic residues) spans 720 to 774; it reads SPAEAKPPAEAKSPAEAKSPAEAKSPAEAKSPAEAKSPVEVKSPEKAKSPVKEGA. The 37; approximate repeat unit spans residues 725–730; it reads KPPAEA. Tandem repeats lie at residues 731-736, 737-742, 743-748, 749-754, 755-760, 761-766, and 767-772. Ser732, Ser738, Ser744, Ser750, Ser756, and Ser762 each carry phosphoserine. The stretch at 775-780 is one 45; approximate repeat; it reads KSLAEA. Phosphoserine is present on residues Ser776, Ser782, and Ser788. Repeat copies occupy residues 781-786 and 787-792. Basic and acidic residues-rich tracts occupy residues 781 to 953 and 963 to 1072; these read KSPE…KAAA and GVKE…KGDK. The stretch at 795-800 is one 48; approximate repeat; that stretch reads KPPAEV. 4 consecutive repeat copies span residues 801–806, 807–812, 815–820, and 826–831. Phosphoserine is present on residues Ser802, Ser808, Ser816, and Ser827. At Thr832 the chain carries Phosphothreonine. A phosphoserine mark is found at Ser846, Ser852, Ser860, Ser880, and Ser937. 3 repeat units span residues 851–856, 859–864, and 879–884.

This sequence belongs to the intermediate filament family. As to quaternary structure, forms heterodimers with NEFL; which can further hetero-oligomerize (in vitro). Forms heterodimers with INA (in vitro). In terms of processing, there are a number of repeats of the tripeptide K-S-P, NFH is phosphorylated on a number of the serines in this motif. It is thought that phosphorylation of NFH results in the formation of interfilament cross bridges that are important in the maintenance of axonal caliber. Phosphorylation seems to play a major role in the functioning of the larger neurofilament polypeptides (NF-M and NF-H), the levels of phosphorylation being altered developmentally and coincidentally with a change in the neurofilament function. Post-translationally, phosphorylated in the head and rod regions by the PKC kinase PKN1, leading to the inhibition of polymerization. As to expression, expressed in the dorsal root ganglion neurons (at protein level). Expressed in cutaneous and muscular sensory neurons.

The protein localises to the cytoplasm. It is found in the cytoskeleton. The protein resides in the cell projection. It localises to the axon. In terms of biological role, neurofilaments usually contain three intermediate filament proteins: NEFL, NEFM, and NEFH which are involved in the maintenance of neuronal caliber. NEFH has an important function in mature axons that is not subserved by the two smaller NEF proteins. May additionally cooperate with the neuronal intermediate filament proteins PRPH and INA to form neuronal filamentous networks. This chain is Neurofilament heavy polypeptide (Nefh), found in Rattus norvegicus (Rat).